Reading from the N-terminus, the 559-residue chain is Heterochromatin protein 1-binding protein 3 (559 aa).

Residues 1 to 132 (MATDLSEAEP…SKEKEKKVKK (132 aa)) form a disordered region. Basic and acidic residues-rich tracts occupy residues 51–68 (TPPK…KADA) and 96–128 (EQPK…EKEK). H15 domains follow at residues 158–233 (SRPK…VVVS), 256–331 (QQVK…QLKK), and 339–414 (GGTL…QLCF). A PxVxL motif motif is present at residues 256–260 (QQVKL). A disordered region spans residues 421 to 559 (DVLYPEKQQD…AMRKSLRAKK (139 aa)). Positions 429-459 (QDEDSEESQEEEEEESEEEEESEEEESEEEE) are enriched in acidic residues. The segment covering 463 to 515 (KKRMQKRPPPKSRSRAPPMKRRESKPKPRKTPAAHQGKAKPPPKVKTPVKKAK) has biased composition (basic residues). Low complexity predominate over residues 516–533 (PAAPAIKKPSGGSSSKKP). Residues 549–559 (SAMRKSLRAKK) show a composition bias toward basic residues.

The protein localises to the nucleus. Its subcellular location is the chromosome. In terms of biological role, component of heterochromatin that maintains heterochromatin integrity during G1/S progression and regulates the duration of G1 phase to critically influence cell proliferative capacity. The protein is Heterochromatin protein 1-binding protein 3 (HP1BP3) of Gallus gallus (Chicken).